The following is a 198-amino-acid chain: MKSPSSLAFLTEALRRLPGVGPKSAQRMAYHLMQHDRDGAAMLGRALSQAVERVQHCAMCNTFTESAVCETCLDAERNAALLCVVETPGDQLMIEQTLTFKGLYFVLMGRLSPLDGIGPKDIHLEKLISRATDGIVQEVVLATNFTNEGEATAHYISETLKARGLKVSRLARGVPVGGELEYVDAGTIARAMLDRRTT.

Residues 57-72 (CAMCNTFTESAVCETC) form a C4-type zinc finger. The 96-residue stretch at 80–175 (ALLCVVETPG…KVSRLARGVP (96 aa)) folds into the Toprim domain.

This sequence belongs to the RecR family.

In terms of biological role, may play a role in DNA repair. It seems to be involved in an RecBC-independent recombinational process of DNA repair. It may act with RecF and RecO. This Herminiimonas arsenicoxydans protein is Recombination protein RecR.